A 352-amino-acid chain; its full sequence is Homocitrate synthase, omega subunit (352 aa).

It belongs to the alpha-IPM synthase/homocitrate synthase family. As to quaternary structure, heterodimer of an alpha and an omega chain.

The enzyme catalyses acetyl-CoA + 2-oxoglutarate + H2O = (2R)-homocitrate + CoA + H(+). This protein is a Fe-Mo-cofactor biosynthetic component. This Clostridium pasteurianum protein is Homocitrate synthase, omega subunit (nifV-OMEGA).